The sequence spans 365 residues: 4-hydroxy-3-methylbut-2-en-1-yl diphosphate synthase (flavodoxin) (365 aa).

Residues C265, C268, C300, and E307 each coordinate [4Fe-4S] cluster.

It belongs to the IspG family. Requires [4Fe-4S] cluster as cofactor.

It carries out the reaction (2E)-4-hydroxy-3-methylbut-2-enyl diphosphate + oxidized [flavodoxin] + H2O + 2 H(+) = 2-C-methyl-D-erythritol 2,4-cyclic diphosphate + reduced [flavodoxin]. It functions in the pathway isoprenoid biosynthesis; isopentenyl diphosphate biosynthesis via DXP pathway; isopentenyl diphosphate from 1-deoxy-D-xylulose 5-phosphate: step 5/6. Converts 2C-methyl-D-erythritol 2,4-cyclodiphosphate (ME-2,4cPP) into 1-hydroxy-2-methyl-2-(E)-butenyl 4-diphosphate. This is 4-hydroxy-3-methylbut-2-en-1-yl diphosphate synthase (flavodoxin) from Bacillus mycoides (strain KBAB4) (Bacillus weihenstephanensis).